A 341-amino-acid polypeptide reads, in one-letter code: Glucokinase (341 aa).

7 to 12 lines the ATP pocket; it reads GDIGGT.

Belongs to the bacterial glucokinase family.

It localises to the cytoplasm. The catalysed reaction is D-glucose + ATP = D-glucose 6-phosphate + ADP + H(+). In Nostoc punctiforme (strain ATCC 29133 / PCC 73102), this protein is Glucokinase.